A 212-amino-acid chain; its full sequence is Putative 3-methyladenine DNA glycosylase (212 aa).

The protein belongs to the DNA glycosylase MPG family.

This chain is Putative 3-methyladenine DNA glycosylase, found in Nocardia farcinica (strain IFM 10152).